The chain runs to 277 residues: Ribosome-inactivating protein luffin-alpha (277 aa).

Residues 1–19 (MKRFTVLILAIFVAASTVE) form the signal peptide. E179 is a catalytic residue.

It belongs to the ribosome-inactivating protein family. Type 1 RIP subfamily.

It carries out the reaction Endohydrolysis of the N-glycosidic bond at one specific adenosine on the 28S rRNA.. This chain is Ribosome-inactivating protein luffin-alpha, found in Luffa aegyptiaca (Sponge gourd).